Consider the following 99-residue polypeptide: Co-chaperonin GroES (99 aa).

Belongs to the GroES chaperonin family. Heptamer of 7 subunits arranged in a ring. Interacts with the chaperonin GroEL.

It is found in the cytoplasm. Functionally, together with the chaperonin GroEL, plays an essential role in assisting protein folding. The GroEL-GroES system forms a nano-cage that allows encapsulation of the non-native substrate proteins and provides a physical environment optimized to promote and accelerate protein folding. GroES binds to the apical surface of the GroEL ring, thereby capping the opening of the GroEL channel. This chain is Co-chaperonin GroES, found in Methylacidiphilum infernorum (isolate V4) (Methylokorus infernorum (strain V4)).